Reading from the N-terminus, the 440-residue chain is MFLAQEIIRKKRDGQALSEEEIRFFINGIRDNVVSEGQIAALAMTIYFHDMSMPERVALTMAMRDSGTVLNWKSLNLNGPMVDKHSTGGVGDVTSLMLGPMVAACGGYVPMISGRGLGHTGGTLDKLEAIPGFDIFPDDSAFRKIIQDVGVAIIGQTSSLAPADKRFYATRDITATVDSIPLITASILAKKLAEGLDALVMDVKVGSGAFMPTYQLSEDLAKAIVGVANGAGCKTTALLTDMNQVLASSAGNAVEVREAVRFLTGEYRNPRLLEVTMALCVEMLLSGGLAQNDADARAKLQAVLDNGKAAEIFGRMVAAQKGPSDFVERYDSYLPAAMLSKPVFAERSGIITAMDTRALGMAVVSLGGGRRRATDPIDYSVGLTEMARLGASVDGQQPLAVIHANNEDDWQQAADAVRAAITLGQKAAEETPVVYRRITE.

It belongs to the thymidine/pyrimidine-nucleoside phosphorylase family. In terms of assembly, homodimer.

It catalyses the reaction thymidine + phosphate = 2-deoxy-alpha-D-ribose 1-phosphate + thymine. It functions in the pathway pyrimidine metabolism; dTMP biosynthesis via salvage pathway; dTMP from thymine: step 1/2. In terms of biological role, the enzymes which catalyze the reversible phosphorolysis of pyrimidine nucleosides are involved in the degradation of these compounds and in their utilization as carbon and energy sources, or in the rescue of pyrimidine bases for nucleotide synthesis. The polypeptide is Thymidine phosphorylase (Yersinia enterocolitica serotype O:8 / biotype 1B (strain NCTC 13174 / 8081)).